The primary structure comprises 632 residues: MAU2 chromatid cohesion factor homolog (632 aa).

2 TPR repeats span residues 453 to 486 and 493 to 526; these read GGFY…ANAE and SCSL…ASKI.

The protein belongs to the SCC4/mau-2 family. In terms of assembly, interacts with Nipped-B to form the cohesin loading complex.

Its subcellular location is the nucleus. It localises to the nucleoplasm. Its function is as follows. Required for association of the cohesin complex with chromatin during interphase. Plays a role in sister chromatid cohesion and normal progression through prometaphase. In Drosophila sechellia (Fruit fly), this protein is MAU2 chromatid cohesion factor homolog.